We begin with the raw amino-acid sequence, 60 residues long: Pepsin-3 (60 aa).

A propeptide spans 1–35 (INVPLTRHKSMRESLREKGIELPYQDPAIKYRPEF) (activation peptide).

This sequence belongs to the peptidase A1 family.

This is Pepsin-3 from Thunnus orientalis (North Pacific bluefin tuna).